The following is a 207-amino-acid chain: Nitrophorin-1 (207 aa).

The N-terminal stretch at methionine 1–glycine 23 is a signal peptide. Cystine bridges form between cysteine 25–cysteine 145 and cysteine 64–cysteine 194. Residue histidine 82 participates in heme binding.

Belongs to the calycin superfamily. Nitrophorin family. Salivary gland (at protein level).

The protein resides in the secreted. Functionally, heme-based protein that deliver nitric oxide gas (NO) to the victim while feeding, resulting in vasodilation and inhibition of platelet aggregation. Reversibly binds nitric oxide (NO). Also binds tightly to histamine, which is released by the host to induce wound healing. The chain is Nitrophorin-1 from Rhodnius prolixus (Triatomid bug).